A 460-amino-acid chain; its full sequence is Serine--tRNA ligase (460 aa).

Residue Thr-255–Glu-257 participates in L-serine binding. Residues Arg-286–Glu-288 and Val-302 contribute to the ATP site. L-serine is bound at residue Glu-309. ATP is bound at residue Glu-373–Ser-376. An L-serine-binding site is contributed by Thr-409.

This sequence belongs to the class-II aminoacyl-tRNA synthetase family. Type-1 seryl-tRNA synthetase subfamily. Homodimer. The tRNA molecule binds across the dimer.

The protein resides in the cytoplasm. It catalyses the reaction tRNA(Ser) + L-serine + ATP = L-seryl-tRNA(Ser) + AMP + diphosphate + H(+). The enzyme catalyses tRNA(Sec) + L-serine + ATP = L-seryl-tRNA(Sec) + AMP + diphosphate + H(+). The protein operates within aminoacyl-tRNA biosynthesis; selenocysteinyl-tRNA(Sec) biosynthesis; L-seryl-tRNA(Sec) from L-serine and tRNA(Sec): step 1/1. Functionally, catalyzes the attachment of serine to tRNA(Ser). Is also able to aminoacylate tRNA(Sec) with serine, to form the misacylated tRNA L-seryl-tRNA(Sec), which will be further converted into selenocysteinyl-tRNA(Sec). This is Serine--tRNA ligase from Aeropyrum pernix (strain ATCC 700893 / DSM 11879 / JCM 9820 / NBRC 100138 / K1).